Consider the following 284-residue polypeptide: Pantothenate synthetase (284 aa).

30 to 37 (MGNLHDGH) contributes to the ATP binding site. Residue His-37 is the Proton donor of the active site. Gln-61 lines the (R)-pantoate pocket. Gln-61 serves as a coordination point for beta-alanine. ATP is bound at residue 149-152 (GEKD). Residue Gln-155 coordinates (R)-pantoate. ATP is bound by residues Ile-178 and 186–189 (LSSR).

This sequence belongs to the pantothenate synthetase family. As to quaternary structure, homodimer.

It localises to the cytoplasm. The catalysed reaction is (R)-pantoate + beta-alanine + ATP = (R)-pantothenate + AMP + diphosphate + H(+). Its pathway is cofactor biosynthesis; (R)-pantothenate biosynthesis; (R)-pantothenate from (R)-pantoate and beta-alanine: step 1/1. Its function is as follows. Catalyzes the condensation of pantoate with beta-alanine in an ATP-dependent reaction via a pantoyl-adenylate intermediate. The sequence is that of Pantothenate synthetase from Salmonella typhi.